The primary structure comprises 249 residues: Cobalt transport protein CbiM (249 aa).

The N-terminal stretch at 1-27 (MKPLHRWLPVVIGAALLIIFESRAAYA) is a signal peptide. 6 helical membrane passes run 33-53 (GFLPPVWAGFWFIVVLPFWVL), 70-90 (LLLGFAAAFAFVLSALKIPSV), 102-122 (LGTILFGPLVMSVLGSIVLLF), 134-154 (TLGANAFSMAVVGPFVAWLIW), 161-181 (APIWLTVFLAAALADLFTYVV), and 207-227 (IFAVTQIPLAISEGILTVLIF).

Belongs to the CbiM family. In terms of assembly, forms an energy-coupling factor (ECF) transporter complex composed of an ATP-binding protein (A component, CbiO), a transmembrane protein (T component, CbiQ) and 2 possible substrate-capture proteins (S components, CbiM and CbiN) of unknown stoichimetry.

The protein localises to the cell membrane. It functions in the pathway cofactor biosynthesis; adenosylcobalamin biosynthesis. Functionally, part of the energy-coupling factor (ECF) transporter complex CbiMNOQ involved in cobalt import. The polypeptide is Cobalt transport protein CbiM (Roseiflexus sp. (strain RS-1)).